The chain runs to 239 residues: MNEDIKNNLNNSDESNGKIIVGLDEAGRGPVIGPMVIASVKINEKDLPRLDDLGLRDSKQLSKKKREELYTKISEICDVKKVVINPEKIDEQMEIINLNKIELGAFSKLANHFIKENENISIYIDACSSNEQSFSNQFKAKLINKNVEIIAEHKADENYKIVSAASIIAKVTRDNVIEEYKKTFGEIGSGYPSDPKTKKFLKNYVHENKGLPKIARKSWATSKNLLKEIEESKIFQWVK.

The RNase H type-2 domain occupies 18–231 (KIIVGLDEAG…SKNLLKEIEE (214 aa)). Positions 24, 25, and 125 each coordinate a divalent metal cation.

This sequence belongs to the RNase HII family. Requires Mn(2+) as cofactor. It depends on Mg(2+) as a cofactor.

It is found in the cytoplasm. The catalysed reaction is Endonucleolytic cleavage to 5'-phosphomonoester.. Its function is as follows. Endonuclease that specifically degrades the RNA of RNA-DNA hybrids. This is Ribonuclease HII from Methanococcus maripaludis (strain C5 / ATCC BAA-1333).